The primary structure comprises 307 residues: MVAHQKADFKSKWAMVVTVNNLNDKKRADLREFSEWFIETLRLEGAFIGHYFNYEAAPVTIVETLPGNFDSCTNAYQKIHKEHPQVVLVVHILPQSQSNEYEWMKVLASRYGFVRQGLLYDNCANRFQNVETDQNSVFRNMCQWIYRSGTAIVRNEGNACGILHGKDPKPTFDKVLFNSEDIKDSVFKVLHAEEEPRGADQENMLKISGYPGMLNTFGIAQLLTPYRVNGITITGAQSAVVALENKFQVYQAVQDFNGKKLDRNHKLQVSSLVVSSPAVPLEWPSLKKSKKLVEQVGKPIRLSKVSS.

In terms of assembly, component of the pid-1 variant of the PETISCO complex (also called the pid-3, erh-2, tofu-6, and ife-3 small RNA complex) containing at least pid-1, tofu-6, ife-3, pid-3, and erh-2, which is required for the biogenesis of a class of 21 nucleotide PIWI-interacting RNAs (piRNAs) that possess a uracil residue at the 5'-end (also called 21U-RNAs). Within the complex interacts with pid-1; the interaction is direct. Component of the tost-1 variant of the PETISCO complex (also called the pid-3, erh-2, tofu-6, and ife-3 small RNA complex) containing at least tost-1, tofu-6, ife-3, pid-3, and erh-2, which plays an essential role in embryogenesis. Within the complex interacts with tost-1. Within the pid-1 and tost-1 variants of the PETISCO complexes interacts with tofu-6 (via the RRM domain) and erh-2. In contrast to the pid-1 variant of the PETISCO complex, the tost-1 variant of the PETISCO complex plays a minor role in the biogenesis of 21U-RNAs. Expressed in the germline (at protein level).

The protein localises to the cytoplasm. It localises to the perinuclear region. It is found in the nucleus. Component of the pid-1 and tost-1 variants of the PETISCO complexes, which have roles in the biogenesis of a class of 21 nucleotide PIWI-interacting RNAs (piRNAs) that possess a uracil residue at the 5'-end (also called 21U-RNAs) and embryogenesis, respectively. Within the pid-1 variant of the PETISCO complex may stabilize 21U-RNA precursor molecules. Promotes the biogenesis of 21U-RNAs. Required for chromosome segregation and cell division in early embryos. This Caenorhabditis elegans protein is Protein pid-3.